The following is a 455-amino-acid chain: Bifunctional protein GlmU (455 aa).

The interval methionine 1–arginine 230 is pyrophosphorylase. Residues leucine 9–glycine 12, lysine 23, glutamine 73, glycine 78–threonine 79, serine 101–aspartate 103, glycine 140, glutamate 155, asparagine 170, and asparagine 228 each bind UDP-N-acetyl-alpha-D-glucosamine. Residue aspartate 103 coordinates Mg(2+). Residue asparagine 228 coordinates Mg(2+). The interval serine 231–aspartate 251 is linker. The segment at glycine 252 to tryptophan 455 is N-acetyltransferase. Positions 333 and 351 each coordinate UDP-N-acetyl-alpha-D-glucosamine. The active-site Proton acceptor is the histidine 363. The UDP-N-acetyl-alpha-D-glucosamine site is built by tyrosine 366 and asparagine 377. Residues asparagine 386–tyrosine 387, serine 405, alanine 423, and arginine 440 each bind acetyl-CoA.

In the N-terminal section; belongs to the N-acetylglucosamine-1-phosphate uridyltransferase family. This sequence in the C-terminal section; belongs to the transferase hexapeptide repeat family. In terms of assembly, homotrimer. Mg(2+) serves as cofactor.

It is found in the cytoplasm. The enzyme catalyses alpha-D-glucosamine 1-phosphate + acetyl-CoA = N-acetyl-alpha-D-glucosamine 1-phosphate + CoA + H(+). It catalyses the reaction N-acetyl-alpha-D-glucosamine 1-phosphate + UTP + H(+) = UDP-N-acetyl-alpha-D-glucosamine + diphosphate. Its pathway is nucleotide-sugar biosynthesis; UDP-N-acetyl-alpha-D-glucosamine biosynthesis; N-acetyl-alpha-D-glucosamine 1-phosphate from alpha-D-glucosamine 6-phosphate (route II): step 2/2. It participates in nucleotide-sugar biosynthesis; UDP-N-acetyl-alpha-D-glucosamine biosynthesis; UDP-N-acetyl-alpha-D-glucosamine from N-acetyl-alpha-D-glucosamine 1-phosphate: step 1/1. The protein operates within bacterial outer membrane biogenesis; LPS lipid A biosynthesis. Catalyzes the last two sequential reactions in the de novo biosynthetic pathway for UDP-N-acetylglucosamine (UDP-GlcNAc). The C-terminal domain catalyzes the transfer of acetyl group from acetyl coenzyme A to glucosamine-1-phosphate (GlcN-1-P) to produce N-acetylglucosamine-1-phosphate (GlcNAc-1-P), which is converted into UDP-GlcNAc by the transfer of uridine 5-monophosphate (from uridine 5-triphosphate), a reaction catalyzed by the N-terminal domain. The sequence is that of Bifunctional protein GlmU from Limosilactobacillus fermentum (strain NBRC 3956 / LMG 18251) (Lactobacillus fermentum).